Reading from the N-terminus, the 133-residue chain is Nickel-responsive regulator (133 aa).

Positions 76, 87, 89, and 95 each coordinate Ni(2+).

It belongs to the transcriptional regulatory CopG/NikR family. Homotetramer. The cofactor is Ni(2+).

Its function is as follows. Transcriptional repressor of the nikABCDE operon. Is active in the presence of excessive concentrations of intracellular nickel. The protein is Nickel-responsive regulator of Escherichia coli (strain SMS-3-5 / SECEC).